The sequence spans 860 residues: Spindle and centriole-associated protein 1 (860 aa).

Disordered stretches follow at residues 127-150, 172-201, 230-250, and 294-332; these read RKRT…GINQ, DDAG…HSNR, ATQS…AEDQ, and PLLA…TGSS. Polar residues-rich tracts occupy residues 139–150, 190–200, and 230–245; these read PDSSQSHTGINQ, ELPNSLSQHSN, and ATQS…SSEL. Thr-236 carries the post-translational modification Phosphothreonine. Ser-240 carries the post-translational modification Phosphoserine. Residues 317–329 show a composition bias toward low complexity; it reads SSSTASADRPSST. A coiled-coil region spans residues 383–439; sequence RYLKESEIQLRKEVETRQQLEQMLGDHRELIDALTAEILSLREENSTMQARLQQYMV. Positions 623 to 645 are disordered; that stretch reads PAFVSLSQPPCSSLPSTQQPRNP. Residues 627 to 642 show a composition bias toward low complexity; that stretch reads SLSQPPCSSLPSTQQP. Ser-648 is subject to Phosphoserine. Residues 693–718 are disordered; it reads ITSSGGEQGDGLREPRKQGSASEVST. A coiled-coil region spans residues 729–757; that stretch reads SSMEERIAELNRQSMEARSKLLQLIEQQK. Ser-765, Ser-766, Ser-769, and Ser-824 each carry phosphoserine. Residues 792 to 860 are disordered; the sequence is GMEASESSKC…GWFALSAHIP (69 aa). A compositionally biased stretch (low complexity) spans 804 to 824; the sequence is VSPVSGNSSRRSSGAISNSCS.

In terms of assembly, interacts with CEP120.

The protein resides in the cytoplasm. It is found in the cytoskeleton. Its subcellular location is the microtubule organizing center. It localises to the centrosome. The protein localises to the centriole. The protein resides in the spindle. In terms of biological role, regulator required for centriole duplication, for proper bipolar spindle formation and chromosome congression in mitosis. In Mus musculus (Mouse), this protein is Spindle and centriole-associated protein 1 (Spice1).